The following is an 81-amino-acid chain: Large ribosomal subunit protein eL31 (81 aa).

This sequence belongs to the eukaryotic ribosomal protein eL31 family.

This Methanothermobacter thermautotrophicus (strain ATCC 29096 / DSM 1053 / JCM 10044 / NBRC 100330 / Delta H) (Methanobacterium thermoautotrophicum) protein is Large ribosomal subunit protein eL31 (rpl31e).